The primary structure comprises 406 residues: Magnesium transporter NIPA4 (406 aa).

At 1–57 (MELRVANANGSCENGSIVSLYCSSQEVLCQIVRGISPEEPYNATLITWQERVRKKYG) the chain is on the extracellular side. N-linked (GlcNAc...) asparagine glycosylation is found at Asn-9, Asn-14, and Asn-42. A helical membrane pass occupies residues 58-78 (FYIGVGLAFLSCFLIGTSVIL). Topologically, residues 79–126 (KKKGLIRLVATGATRAVNGGYGYLKDPMWWAGMATMSAGEVANFGAYA) are cytoplasmic. A helical membrane pass occupies residues 127–147 (FAPATVVTPLGALSVLISAIF). Residues 148-155 (SSYCLGES) are Extracellular-facing. A helical membrane pass occupies residues 156 to 176 (LNLLGKLGCVICMAGSTVMVI). The Cytoplasmic portion of the chain corresponds to 177-197 (HAPKEEKVTTVAEMASKMKDT). The helical transmembrane segment at 198–218 (GFIVFAVLLVVSCLILIFIVA) threads the bilayer. Residues 219–225 (PRYGQRN) are Extracellular-facing. Residues 226 to 246 (ILIYIIICSVIGSFSVTAVKG) form a helical membrane-spanning segment. Residues 247-263 (LGVTIRNFFQGLPVVRH) are Cytoplasmic-facing. Residues 264–284 (PLPYILSLILGLSIIIQVNFL) traverse the membrane as a helical segment. Over 285–295 (NRALDIFNTSL) the chain is Extracellular. Asn-292 carries an N-linked (GlcNAc...) asparagine glycan. A helical membrane pass occupies residues 296 to 316 (VFPIYYVFFTTVVVASSIVLF). Residues 317 to 326 (KEWYTMSAVD) are Cytoplasmic-facing. A helical transmembrane segment spans residues 327 to 347 (IVGTLSGFVTIILGVFMLHAF). At 348–406 (KDLDINQISLPHTHKNPTPAPAPEPTVIKLEDKNVLVDNIELASTPSPQQKPKVFMTDS) the chain is on the extracellular side.

Belongs to the NIPA family.

The protein localises to the cell membrane. The catalysed reaction is Mg(2+)(in) = Mg(2+)(out). In terms of biological role, acts as a Mg(2+) transporter. Can also transport other divalent cations such as Ba(2+), Sr(2+) and Fe(2+) but to a much less extent than Mg(2+). May be a receptor for ligands (trioxilins A3 and B3) from the hepoxilin pathway. This Mus musculus (Mouse) protein is Magnesium transporter NIPA4 (Nipal4).